The chain runs to 421 residues: Putative zinc finger protein R05D3.3 (421 aa).

2 consecutive C2H2-type zinc fingers follow at residues 207–228 (VLCV…IEAH) and 234–257 (YKCS…RTQH). A disordered region spans residues 400-421 (GSSITDSNEPGPSEIKKELAEV).

The protein resides in the nucleus. In Caenorhabditis elegans, this protein is Putative zinc finger protein R05D3.3.